The following is a 121-amino-acid chain: MALNIENIIAEIKEATILELNDLVKAIEEEFGVTAAAPVAAAAAGGEAAAAKDSFDVELTAAGDKKVGVIKVVREITGEGLKEAKAIVDNAPSVIKEGASEAEANEIKEKLEAAGASVTLK.

This sequence belongs to the bacterial ribosomal protein bL12 family. As to quaternary structure, homodimer. Part of the ribosomal stalk of the 50S ribosomal subunit. Forms a multimeric L10(L12)X complex, where L10 forms an elongated spine to which 2 to 4 L12 dimers bind in a sequential fashion. Binds GTP-bound translation factors.

Functionally, forms part of the ribosomal stalk which helps the ribosome interact with GTP-bound translation factors. Is thus essential for accurate translation. The sequence is that of Large ribosomal subunit protein bL12 from Streptococcus agalactiae serotype V (strain ATCC BAA-611 / 2603 V/R).